Here is a 955-residue protein sequence, read N- to C-terminus: MSVSMKDLDPAFRGAGQKEGLEIWRIENFKPVPIPASSYGKFFMGDSYIILKTTALKNGSLRHDIHYWIGKDTSQDESGTAAILTVELDAALGGRAVQYREIQGNETDKFLSYFRPCIMPQPGGVASGFKHVEVNEQEHETRLYVCTGNRVVHVKEVPFARSSLNHDDIFILDTKSKIFQFNGSNSSIQERAKALEVVQYIKDTFHEGKCEVAAVEDGRLMADAEAGEFWGFFGGFAPLPRRAPVEDNEKYEETVFKLLCFNQGKLEPINYESLLHELLKTNKCYLLDCGVELFVWMGRTTSLQERKSASEAAEKLLSDDNRTKTHVIKVIEGFETVMFKSKFKEWPQTPDLKLSSEDGRGKVAALLKRQGLNVKGLMKAAPAKEEPQAYIDCTGSLQVWRINDKDKILLPSADQSKFYTGDCYIFQYMYPGDDKEECLIGSWFGKKSIEEDRVTAISLASKMVESAKFQAVQTRLYEGKEPIQFFVIFQSFQVFKGGLSSGYKKFIAENGIDDDTYLEDGLALFRIQGSGPENMQAIQVDAAASSLNSSYSYILHDGNTVFTWTGNLTTSLDQEVVERQLDIIKPNSQSRSQKEGSETDQFWSLLGGKSEYPSQKIGRANESDPHLFSCILPKGNLKIKEIYHFTQDDLMTEDVFILDCHSDIFVWVGQQVDVKVRLQALDIGEKFVKLDFLMENLSSDTPIFVIMEGSEPTFFTRFFTWDSAKSLMHGNSYQRKLSIVKGGGSPALDKPKRRTPTYSGRSTVQDKSQRSRSMSFSPERVRVRGRSPAFTALAANFESANSRNLSTPPPVVKKLYPKSATPDSSSAPSKSSATASLTGSFDRPKSVKDGSELEKPKQEEDAKEGINTMTSRVESLTINEDVKENEPEDDEGLPVYPYDRLITTAADPVTEIDVTRRETYLSSAEFKDKFGMTKEAFSKLPKWKQNRMKIALQLF.

4 Gelsolin-like repeats span residues 29 to 111 (FKPV…DKFL), 152 to 218 (VHVK…VEDG), 274 to 339 (LLHE…TVMF), and 644 to 712 (HFTQ…GSEP). Disordered regions lie at residues 741–783 (KGGG…RVRV) and 801–895 (NSRN…GLPV). Positions 756–776 (PTYSGRSTVQDKSQRSRSMSF) are enriched in polar residues. Over residues 817–836 (PKSATPDSSSAPSKSSATAS) the composition is skewed to low complexity. The segment covering 842–864 (DRPKSVKDGSELEKPKQEEDAKE) has biased composition (basic and acidic residues). A compositionally biased stretch (polar residues) spans 867–878 (NTMTSRVESLTI). The region spanning 890–955 (DEGLPVYPYD…NRMKIALQLF (66 aa)) is the HP domain.

The protein belongs to the villin/gelsolin family.

The protein resides in the cytoplasm. It is found in the cytoskeleton. In terms of biological role, ca(2+)-regulated actin-binding protein. Binds actin microfilaments (MFs). Involved in actin filament bundling, severing and capping. Caps the barbed end of actin filaments and is able to sever them in a calcium-dependent manner. The protein is Villin-5 of Oryza sativa subsp. japonica (Rice).